Consider the following 370-residue polypeptide: Uroporphyrinogen decarboxylase (370 aa).

Substrate is bound by residues 29–33 (RQAGR), D79, Y155, S210, and H342.

It belongs to the uroporphyrinogen decarboxylase family. In terms of assembly, homodimer.

It is found in the cytoplasm. It catalyses the reaction uroporphyrinogen III + 4 H(+) = coproporphyrinogen III + 4 CO2. Its pathway is porphyrin-containing compound metabolism; protoporphyrin-IX biosynthesis; coproporphyrinogen-III from 5-aminolevulinate: step 4/4. Functionally, catalyzes the decarboxylation of four acetate groups of uroporphyrinogen-III to yield coproporphyrinogen-III. This is Uroporphyrinogen decarboxylase from Verminephrobacter eiseniae (strain EF01-2).